The sequence spans 222 residues: 7-cyano-7-deazaguanine synthase (222 aa).

Residue 11 to 21 (FSGGQDSTTCL) coordinates ATP. 4 residues coordinate Zn(2+): Cys-187, Cys-195, Cys-198, and Cys-201.

It belongs to the QueC family. The cofactor is Zn(2+).

The catalysed reaction is 7-carboxy-7-deazaguanine + NH4(+) + ATP = 7-cyano-7-deazaguanine + ADP + phosphate + H2O + H(+). Its pathway is purine metabolism; 7-cyano-7-deazaguanine biosynthesis. In terms of biological role, catalyzes the ATP-dependent conversion of 7-carboxy-7-deazaguanine (CDG) to 7-cyano-7-deazaguanine (preQ(0)). This Actinobacillus pleuropneumoniae serotype 3 (strain JL03) protein is 7-cyano-7-deazaguanine synthase.